The chain runs to 946 residues: Bifunctional glutamine synthetase adenylyltransferase/adenylyl-removing enzyme (946 aa).

Positions 1–440 (MKPLSSPLQQ…VFNELIGDDE (440 aa)) are adenylyl removase. Positions 449–946 (SEQWRELWQD…VSWQKWLVEE (498 aa)) are adenylyl transferase.

Belongs to the GlnE family. It depends on Mg(2+) as a cofactor.

It carries out the reaction [glutamine synthetase]-O(4)-(5'-adenylyl)-L-tyrosine + phosphate = [glutamine synthetase]-L-tyrosine + ADP. It catalyses the reaction [glutamine synthetase]-L-tyrosine + ATP = [glutamine synthetase]-O(4)-(5'-adenylyl)-L-tyrosine + diphosphate. Functionally, involved in the regulation of glutamine synthetase GlnA, a key enzyme in the process to assimilate ammonia. When cellular nitrogen levels are high, the C-terminal adenylyl transferase (AT) inactivates GlnA by covalent transfer of an adenylyl group from ATP to specific tyrosine residue of GlnA, thus reducing its activity. Conversely, when nitrogen levels are low, the N-terminal adenylyl removase (AR) activates GlnA by removing the adenylyl group by phosphorolysis, increasing its activity. The regulatory region of GlnE binds the signal transduction protein PII (GlnB) which indicates the nitrogen status of the cell. This chain is Bifunctional glutamine synthetase adenylyltransferase/adenylyl-removing enzyme, found in Escherichia coli (strain SMS-3-5 / SECEC).